The chain runs to 391 residues: Transcription factor TCP3 (391 aa).

A disordered region spans residues 1–34 (MAPDNDHFLDSPSPPLLEMRHHQSATENGGGCGE). Positions 49–107 (RKDRHSKVCTAKGPRDRRVRLSAPTAIQFYDVQDRLGFDRPSKAVDWLITKAKSAIDDL) constitute a TCP domain. Disordered stretches follow at residues 122–168 (HAAA…PASM), 317–345 (HHHH…PGIH), and 363–391 (FRIP…DSRH). Residues 381-391 (KPSSASSDSRH) are compositionally biased toward polar residues.

As to quaternary structure, interacts with SPL. Interacts with KIN10; KIN11 and FLZ3. As to expression, expressed in cotyledons, particularly in the vascular region, in leaves, roots, buds, flowers and immature siliques.

It localises to the nucleus. Its function is as follows. Plays a pivotal role in the control of morphogenesis of shoot organs by negatively regulating the expression of boundary-specific genes such as CUC genes, probably through the induction of miRNA (e.g. miR164). Participates in ovule development. The protein is Transcription factor TCP3 (TCP3) of Arabidopsis thaliana (Mouse-ear cress).